We begin with the raw amino-acid sequence, 286 residues long: Thymidylate synthase (286 aa).

R21 lines the dUMP pocket. N51 provides a ligand contact to (6R)-5,10-methylene-5,6,7,8-tetrahydrofolate. Position 150–151 (150–151) interacts with dUMP; the sequence is RR. C170 acts as the Nucleophile in catalysis. Residues 190-193, N201, and 231-233 contribute to the dUMP site; these read RSAD and HIY. D193 serves as a coordination point for (6R)-5,10-methylene-5,6,7,8-tetrahydrofolate. A285 serves as a coordination point for (6R)-5,10-methylene-5,6,7,8-tetrahydrofolate.

It belongs to the thymidylate synthase family. Bacterial-type ThyA subfamily. In terms of assembly, homodimer.

The protein localises to the cytoplasm. It carries out the reaction dUMP + (6R)-5,10-methylene-5,6,7,8-tetrahydrofolate = 7,8-dihydrofolate + dTMP. Its pathway is pyrimidine metabolism; dTTP biosynthesis. Catalyzes the reductive methylation of 2'-deoxyuridine-5'-monophosphate (dUMP) to 2'-deoxythymidine-5'-monophosphate (dTMP) while utilizing 5,10-methylenetetrahydrofolate (mTHF) as the methyl donor and reductant in the reaction, yielding dihydrofolate (DHF) as a by-product. This enzymatic reaction provides an intracellular de novo source of dTMP, an essential precursor for DNA biosynthesis. The polypeptide is Thymidylate synthase (Mycoplasmopsis pulmonis (strain UAB CTIP) (Mycoplasma pulmonis)).